The following is an 89-amino-acid chain: Small ribosomal subunit protein uS15 (89 aa).

Belongs to the universal ribosomal protein uS15 family. In terms of assembly, part of the 30S ribosomal subunit. Forms a bridge to the 50S subunit in the 70S ribosome, contacting the 23S rRNA.

One of the primary rRNA binding proteins, it binds directly to 16S rRNA where it helps nucleate assembly of the platform of the 30S subunit by binding and bridging several RNA helices of the 16S rRNA. Its function is as follows. Forms an intersubunit bridge (bridge B4) with the 23S rRNA of the 50S subunit in the ribosome. The chain is Small ribosomal subunit protein uS15 from Shewanella denitrificans (strain OS217 / ATCC BAA-1090 / DSM 15013).